Reading from the N-terminus, the 309-residue chain is MQSNQENSKKGQYNLNKLQKRLRRNVGEAIADFNMIEEGDRIMVCLSGGKDSYTMLEILRNLQQSAPISFSLVAVNLDQKQPGFPAHILPEYLEQQGVEYKIVDEDTYSIVKEKIPEGKTTCSLCSRLRRGILYRTASELGCTKIALGHHRDDILQTLFLNMFYGGKMKGMPPKLMSDDGQHIVIRPLAYCREKDIERFAIARQYPIIPCNLCGSQPNLQRQVIGDMLRDWDKRYPGRIETMFTAMQNVVPSHLADADLFDFKQIRHGSEVIDGGDLAFDRETLPLQPSAWQPEEDEATPARLDVVQIR.

A PP-loop motif motif is present at residues 47-52 (SGGKDS). Residues C122, C125, and C213 each contribute to the [4Fe-4S] cluster site.

Belongs to the TtcA family. In terms of assembly, homodimer. Mg(2+) serves as cofactor. The cofactor is [4Fe-4S] cluster.

The protein localises to the cytoplasm. It carries out the reaction cytidine(32) in tRNA + S-sulfanyl-L-cysteinyl-[cysteine desulfurase] + AH2 + ATP = 2-thiocytidine(32) in tRNA + L-cysteinyl-[cysteine desulfurase] + A + AMP + diphosphate + H(+). The protein operates within tRNA modification. Catalyzes the ATP-dependent 2-thiolation of cytidine in position 32 of tRNA, to form 2-thiocytidine (s(2)C32). The sulfur atoms are provided by the cysteine/cysteine desulfurase (IscS) system. The polypeptide is tRNA-cytidine(32) 2-sulfurtransferase (Erwinia tasmaniensis (strain DSM 17950 / CFBP 7177 / CIP 109463 / NCPPB 4357 / Et1/99)).